The following is a 512-amino-acid chain: 2,3-bisphosphoglycerate-independent phosphoglycerate mutase (512 aa).

The Mn(2+) site is built by Asp11 and Ser61. Ser61 functions as the Phosphoserine intermediate in the catalytic mechanism. Substrate is bound by residues His122, 152-153 (RD), Arg184, Arg190, 259-262 (RADR), and Lys332. Positions 399, 403, 440, 441, and 459 each coordinate Mn(2+).

It belongs to the BPG-independent phosphoglycerate mutase family. Monomer. It depends on Mn(2+) as a cofactor.

It carries out the reaction (2R)-2-phosphoglycerate = (2R)-3-phosphoglycerate. It participates in carbohydrate degradation; glycolysis; pyruvate from D-glyceraldehyde 3-phosphate: step 3/5. Its function is as follows. Catalyzes the interconversion of 2-phosphoglycerate and 3-phosphoglycerate. In Francisella tularensis subsp. tularensis (strain WY96-3418), this protein is 2,3-bisphosphoglycerate-independent phosphoglycerate mutase.